Reading from the N-terminus, the 254-residue chain is Imidazole glycerol phosphate synthase subunit HisF (254 aa).

Residues D13 and D132 contribute to the active site.

Belongs to the HisA/HisF family. Heterodimer of HisH and HisF.

The protein resides in the cytoplasm. The enzyme catalyses 5-[(5-phospho-1-deoxy-D-ribulos-1-ylimino)methylamino]-1-(5-phospho-beta-D-ribosyl)imidazole-4-carboxamide + L-glutamine = D-erythro-1-(imidazol-4-yl)glycerol 3-phosphate + 5-amino-1-(5-phospho-beta-D-ribosyl)imidazole-4-carboxamide + L-glutamate + H(+). Its pathway is amino-acid biosynthesis; L-histidine biosynthesis; L-histidine from 5-phospho-alpha-D-ribose 1-diphosphate: step 5/9. In terms of biological role, IGPS catalyzes the conversion of PRFAR and glutamine to IGP, AICAR and glutamate. The HisF subunit catalyzes the cyclization activity that produces IGP and AICAR from PRFAR using the ammonia provided by the HisH subunit. The protein is Imidazole glycerol phosphate synthase subunit HisF of Sulfurovum sp. (strain NBC37-1).